The following is a 761-amino-acid chain: RNA-binding protein mde7 (761 aa).

Polar residues-rich tracts occupy residues 31–46 (PNHSSLSEQQSTNSLL), 58–83 (SRNSTTNPLNLLYTQTQQPARSTTPF), and 99–110 (SRNNSYLQGTAE). Disordered regions lie at residues 31–110 (PNHS…GTAE) and 188–213 (HYFDDTDKSVHSKSSSGSNSLSEASN). Positions 188-197 (HYFDDTDKSV) are enriched in basic and acidic residues. Low complexity predominate over residues 199 to 211 (SKSSSGSNSLSEA). Positions 223–289 (IVGGLPDDFD…SSTNNFTIIQ (67 aa)) constitute an RRM 1 domain. Over residues 442-466 (ESNSLSNQPNNFAQTSFDYQPNHPN) the composition is skewed to polar residues. Residues 442 to 468 (ESNSLSNQPNNFAQTSFDYQPNHPNAI) are disordered. The RRM 2 domain occupies 602–679 (NTIYVGNLSN…GGIRLSYSKN (78 aa)).

This is RNA-binding protein mde7 (mde7) from Schizosaccharomyces pombe (strain 972 / ATCC 24843) (Fission yeast).